Consider the following 159-residue polypeptide: uncharacterized protein (159 aa).

Helical transmembrane passes span Leu22 to Ile42, Pro45 to Leu65, Ile80 to Leu100, and Phe104 to Phe124.

It is found in the membrane. This is an uncharacterized protein from Schizosaccharomyces pombe (strain 972 / ATCC 24843) (Fission yeast).